Reading from the N-terminus, the 142-residue chain is Organic hydroperoxide resistance protein-like 2 (142 aa).

The protein belongs to the OsmC/Ohr family.

The polypeptide is Organic hydroperoxide resistance protein-like 2 (Staphylococcus saprophyticus subsp. saprophyticus (strain ATCC 15305 / DSM 20229 / NCIMB 8711 / NCTC 7292 / S-41)).